The primary structure comprises 678 residues: UvrABC system protein B (678 aa).

Positions 31–417 (EGLENGLAHQ…KSGGEIIDQV (387 aa)) constitute a Helicase ATP-binding domain. 44-51 (GVTGSGKT) lines the ATP pocket. The Beta-hairpin motif lies at 97 to 120 (YYDYYQPEAYVPSSDTFIEKDASI). Residues 436-589 (QVDDLLSEAR…QMKYNEARGI (154 aa)) enclose the Helicase C-terminal domain. The region spanning 638-673 (QQQIKKLEQQMYKYAQDLEFEKAAAVRDQLQQLREH) is the UVR domain.

This sequence belongs to the UvrB family. In terms of assembly, forms a heterotetramer with UvrA during the search for lesions. Interacts with UvrC in an incision complex.

The protein resides in the cytoplasm. In terms of biological role, the UvrABC repair system catalyzes the recognition and processing of DNA lesions. A damage recognition complex composed of 2 UvrA and 2 UvrB subunits scans DNA for abnormalities. Upon binding of the UvrA(2)B(2) complex to a putative damaged site, the DNA wraps around one UvrB monomer. DNA wrap is dependent on ATP binding by UvrB and probably causes local melting of the DNA helix, facilitating insertion of UvrB beta-hairpin between the DNA strands. Then UvrB probes one DNA strand for the presence of a lesion. If a lesion is found the UvrA subunits dissociate and the UvrB-DNA preincision complex is formed. This complex is subsequently bound by UvrC and the second UvrB is released. If no lesion is found, the DNA wraps around the other UvrB subunit that will check the other stand for damage. The sequence is that of UvrABC system protein B from Pasteurella multocida (strain Pm70).